Reading from the N-terminus, the 293-residue chain is Serine/threonine-protein phosphatase 2A catalytic subunit beta isoform (293 aa).

Positions 41, 43, 69, and 101 each coordinate Mn(2+). The active-site Proton donor is the histidine 102. Residues histidine 151 and histidine 225 each contribute to the Mn(2+) site. Tyrosine 291 carries the post-translational modification Phosphotyrosine. Leucine 293 bears the Leucine methyl ester mark.

Belongs to the PPP phosphatase family. PP-1 subfamily. As to quaternary structure, found in a complex with at least ARL2, PPP2CB, PPP2R1A, PPP2R2A, PPP2R5E and TBCD. Interacts with TBCD. PP2A consists of a common heterodimeric core enzyme (composed of a 36 kDa catalytic subunit (subunit C) and a 65 kDa constant regulatory subunit (PR65) (subunit A)) that associates with a variety of regulatory subunits. Proteins that associate with the core dimer include three families of regulatory subunits B (the R2/B/PR55/B55, R3/B''/PR72/PR130/PR59 and R5/B'/B56 families), the 48 kDa variable regulatory subunit, viral proteins, and cell signaling molecules. Binds PPME1. May indirectly interact with SGO1, most probably through regulatory B56 subunits. Interacts with CTTNBP2NL. Interacts with PTPA. Part of the core of STRIPAK complexes composed of PP2A catalytic and scaffolding subunits, the striatins (PP2A regulatory subunits), the striatin-associated proteins MOB4, STRIP1 and STRIP2, PDCD10 and members of the STE20 kinases, such as STK24 and STK26. Mn(2+) serves as cofactor. Post-translationally, reversibly methyl esterified on Leu-293 by leucine carboxyl methyltransferase 1 (Lcmt1) and protein phosphatase methylesterase 1 (PPME1). Carboxyl methylation influences the affinity of the catalytic subunit for the different regulatory subunits, thereby modulating the PP2A holoenzyme's substrate specificity, enzyme activity and cellular localization. In terms of processing, phosphorylation of either threonine (by autophosphorylation-activated protein kinase) or tyrosine results in inactivation of the phosphatase. Auto-dephosphorylation has been suggested as a mechanism for reactivation. May be monoubiquitinated by NOSIP.

It is found in the cytoplasm. The protein resides in the nucleus. The protein localises to the chromosome. It localises to the centromere. Its subcellular location is the cytoskeleton. It is found in the spindle pole. The catalysed reaction is O-phospho-L-seryl-[protein] + H2O = L-seryl-[protein] + phosphate. It catalyses the reaction O-phospho-L-threonyl-[protein] + H2O = L-threonyl-[protein] + phosphate. Its function is as follows. Catalytic subunit of protein phosphatase 2A (PP2A), a serine/threonine phosphatase involved in the regulation of a wide variety of enzymes, signal transduction pathways, and cellular events. PP2A can modulate the activity of phosphorylase B kinase, casein kinase 2, mitogen-stimulated S6 kinase, and MAP-2 kinase. Part of the striatin-interacting phosphatase and kinase (STRIPAK) complexes. STRIPAK complexes have critical roles in protein (de)phosphorylation and are regulators of multiple signaling pathways including Hippo, MAPK, nuclear receptor and cytoskeleton remodeling. Different types of STRIPAK complexes are involved in a variety of biological processes such as cell growth, differentiation, apoptosis, metabolism and immune regulation. In Sus scrofa (Pig), this protein is Serine/threonine-protein phosphatase 2A catalytic subunit beta isoform (PPP2CB).